The sequence spans 243 residues: DNA repair protein RecO (243 aa).

The protein belongs to the RecO family.

Involved in DNA repair and RecF pathway recombination. This chain is DNA repair protein RecO, found in Vibrio vulnificus (strain CMCP6).